Reading from the N-terminus, the 469-residue chain is Regulator of G-protein signaling 7 (469 aa).

Residues 37-112 (EKNGIPIRTV…DDGTFYRFQT (76 aa)) enclose the DEP domain. Residues Ser229 and Ser241 each carry the phosphoserine modification. The interval 235–256 (NDIRSHSPTHTPTPETKPPTED) is disordered. Thr243 is modified (phosphothreonine). A G protein gamma domain is found at 255 to 316 (EDELQQQIKY…LSDDTTFWEL (62 aa)). Positions 333 to 448 (GMDEALKDPV…IRSSAYQELL (116 aa)) constitute an RGS domain. Ser434 bears the Phosphoserine mark.

In terms of assembly, interacts with GNB5, forming the RGS7-GNB5 complex. Interacts with GPR158; promotes the GTPase activator activity of the RGS7-GNB5 complex in absence of glycine, in contrast GTPase activator activity of the RGS7-GNB5 complex is inhibited in presence of glycine. Interacts with GPR179. Interacts with PKD1; this prevents rapid proteasomal degradation. Interacts with RGS7BP, leading to regulate the subcellular location of the heterodimer formed with GNB5. Interacts (phosphorylated form) with 14-3-3 protein YWHAQ. Interacts with SNAPIN. Interacts with GNAI1. Interacts with GNAO1, GNAI3 and GNAZ. In terms of processing, palmitoylated. Ubiquitinated, leading to rapid proteasomal degradation. Post-translationally, phosphorylation and subsequent interaction with 14-3-3 proteins inhibits GAP activity. As to expression, detected in retina (at protein level).

It localises to the cytoplasm. It is found in the cytosol. Its subcellular location is the cell membrane. The protein localises to the membrane. Its function is as follows. GTPase activator component of the RGS7-GNB5 complex that regulates G protein-coupled receptor signaling cascades. The RGS7-GNB5 complex acts as an inhibitor signal transduction by promoting the GTPase activity of G protein alpha subunits, such as GNAO1, thereby driving them into their inactive GDP-bound form. May play a role in synaptic vesicle exocytosis. Glycine-dependent regulation of the RGS7-GNB5 complex by GPR158 affects mood and cognition via its ability to regulate neuronal excitability in L2/L3 pyramidal neurons of the prefrontal cortex. Modulates the activity of potassium channels that are activated by GNAO1 in response to muscarinic acetylcholine receptor M2/CHRM2 signaling. The chain is Regulator of G-protein signaling 7 (RGS7) from Bos taurus (Bovine).